The chain runs to 147 residues: AP-2 complex subunit sigma (147 aa).

Belongs to the adaptor complexes small subunit family. In terms of assembly, adaptor protein complex 2 (AP-2) is a heterotetramer composed of two large adaptins (alpha-type subunit APL3 and beta-type subunit APL1), a medium chain (mu-type subunit APM4) and a small adaptin (sigma-type subunit APS2). Interacts with APL1.

The protein resides in the cell membrane. Its subcellular location is the membrane. It is found in the coated pit. In terms of biological role, component of the adaptor complexes which link clathrin to receptors in coated vesicles. Clathrin-associated protein complexes are believed to interact with the cytoplasmic tails of membrane proteins, leading to their selection and concentration. The protein is AP-2 complex subunit sigma (APS2) of Saccharomyces cerevisiae (strain ATCC 204508 / S288c) (Baker's yeast).